The sequence spans 130 residues: 3-aminoacrylate deaminase RutC (130 aa).

This sequence belongs to the RutC family.

It catalyses the reaction (Z)-3-aminoacrylate + H2O + H(+) = 3-oxopropanoate + NH4(+). Involved in pyrimidine catabolism. Catalyzes the deamination of 3-aminoacrylate to malonic semialdehyde, a reaction that can also occur spontaneously. RutC may facilitate the reaction and modulate the metabolic fitness, rather than catalyzing essential functions. This Klebsiella variicola (strain At-22) protein is 3-aminoacrylate deaminase RutC.